Reading from the N-terminus, the 297-residue chain is N-acetylmuramic acid 6-phosphate etherase (297 aa).

Residues Ala-55–Lys-218 form the SIS domain. Residue Glu-83 is the Proton donor of the active site. Residue Glu-114 is part of the active site.

It belongs to the GCKR-like family. MurNAc-6-P etherase subfamily. As to quaternary structure, homodimer.

The catalysed reaction is N-acetyl-D-muramate 6-phosphate + H2O = N-acetyl-D-glucosamine 6-phosphate + (R)-lactate. It functions in the pathway amino-sugar metabolism; N-acetylmuramate degradation. In terms of biological role, specifically catalyzes the cleavage of the D-lactyl ether substituent of MurNAc 6-phosphate, producing GlcNAc 6-phosphate and D-lactate. This Lactobacillus gasseri (strain ATCC 33323 / DSM 20243 / BCRC 14619 / CIP 102991 / JCM 1131 / KCTC 3163 / NCIMB 11718 / NCTC 13722 / AM63) protein is N-acetylmuramic acid 6-phosphate etherase.